Reading from the N-terminus, the 234-residue chain is Ribose-5-phosphate isomerase A (234 aa).

Substrate contacts are provided by residues 28 to 31, 83 to 86, and 96 to 99; these read TGST, DGAD, and KGGG. E105 (proton acceptor) is an active-site residue. A substrate-binding site is contributed by K123.

It belongs to the ribose 5-phosphate isomerase family. Homodimer.

The catalysed reaction is aldehydo-D-ribose 5-phosphate = D-ribulose 5-phosphate. The protein operates within carbohydrate degradation; pentose phosphate pathway; D-ribose 5-phosphate from D-ribulose 5-phosphate (non-oxidative stage): step 1/1. In terms of biological role, catalyzes the reversible conversion of ribose-5-phosphate to ribulose 5-phosphate. The polypeptide is Ribose-5-phosphate isomerase A (Bartonella quintana (strain Toulouse) (Rochalimaea quintana)).